The sequence spans 1114 residues: WD repeat-containing protein 72 (1114 aa).

7 WD repeats span residues 15-54 (APPH…KISA), 60-102 (GHSA…CVEK), 160-197 (KCMC…NSIQ), 327-373 (EENK…SKFD), 413-452 (GMTA…KAGL), 470-515 (GHHQ…ILHT), and 566-605 (KHLF…LERH). Disordered regions lie at residues 634–658 (SETH…VPCP) and 749–798 (SLQT…PPRK). Positions 780–796 (KRQKKMKSSKKAHPKPP) are enriched in basic residues. Phosphoserine occurs at positions 1093 and 1095.

As to expression, expressed in maturation stage ameloblasts (at protein level).

Its subcellular location is the cytoplasmic vesicle. Its function is as follows. Plays a major role in formation of tooth enamel. Specifically required during the maturation phase of amelogenesis for normal formation of the enamel matrix and clearance of enamel proteins. May be involved in localization of the calcium transporter SLC24A4 to the ameloblast cell membrane. In Mus musculus (Mouse), this protein is WD repeat-containing protein 72.